A 39-amino-acid chain; its full sequence is Photosystem II reaction center protein J (39 aa).

A helical transmembrane segment spans residues 7 to 27 (IPLWLVATVAGMGVITLLGIF).

This sequence belongs to the PsbJ family. As to quaternary structure, PSII is composed of 1 copy each of membrane proteins PsbA, PsbB, PsbC, PsbD, PsbE, PsbF, PsbH, PsbI, PsbJ, PsbK, PsbL, PsbM, PsbT, PsbX, PsbY, PsbZ, Psb30/Ycf12, peripheral proteins PsbO, CyanoQ (PsbQ), PsbU, PsbV and a large number of cofactors. It forms dimeric complexes.

It is found in the cellular thylakoid membrane. One of the components of the core complex of photosystem II (PSII). PSII is a light-driven water:plastoquinone oxidoreductase that uses light energy to abstract electrons from H(2)O, generating O(2) and a proton gradient subsequently used for ATP formation. It consists of a core antenna complex that captures photons, and an electron transfer chain that converts photonic excitation into a charge separation. The protein is Photosystem II reaction center protein J of Cyanothece sp. (strain PCC 7425 / ATCC 29141).